The chain runs to 96 residues: Co-chaperonin GroES (96 aa).

It belongs to the GroES chaperonin family. As to quaternary structure, heptamer of 7 subunits arranged in a ring. Interacts with the chaperonin GroEL.

The protein resides in the cytoplasm. Its function is as follows. Together with the chaperonin GroEL, plays an essential role in assisting protein folding. The GroEL-GroES system forms a nano-cage that allows encapsulation of the non-native substrate proteins and provides a physical environment optimized to promote and accelerate protein folding. GroES binds to the apical surface of the GroEL ring, thereby capping the opening of the GroEL channel. The polypeptide is Co-chaperonin GroES (Syntrophomonas wolfei subsp. wolfei (strain DSM 2245B / Goettingen)).